Consider the following 140-residue polypeptide: ATP synthase epsilon chain (140 aa).

Belongs to the ATPase epsilon chain family. In terms of assembly, F-type ATPases have 2 components, CF(1) - the catalytic core - and CF(0) - the membrane proton channel. CF(1) has five subunits: alpha(3), beta(3), gamma(1), delta(1), epsilon(1). CF(0) has three main subunits: a, b and c.

It localises to the cell inner membrane. In terms of biological role, produces ATP from ADP in the presence of a proton gradient across the membrane. This chain is ATP synthase epsilon chain, found in Thermodesulfovibrio yellowstonii (strain ATCC 51303 / DSM 11347 / YP87).